The chain runs to 193 residues: MFSISVVITIGGLPGSGTTTMARRLAEHYGLKHVYAGKIFREMAEERGMDLEEFSKVAEDNPDIDLEIDRRQREAAEEGDVILEGRLAAFVAAGELDHVKGPDLATLKIWLKAPLEVRAERVAKREGIDVEEARRRIQEREKSELKRYKEIYGVDPTDLSLYDLVLDTSRWSEDETFSILKAAIDPLLEREDP.

Position 12 to 20 (12 to 20) interacts with ATP; sequence GLPGSGTTT.

It belongs to the cytidylate kinase family. Type 2 subfamily.

Its subcellular location is the cytoplasm. The catalysed reaction is CMP + ATP = CDP + ADP. It catalyses the reaction dCMP + ATP = dCDP + ADP. This Methanopyrus kandleri (strain AV19 / DSM 6324 / JCM 9639 / NBRC 100938) protein is Cytidylate kinase.